We begin with the raw amino-acid sequence, 134 residues long: ATP synthase epsilon chain (134 aa).

The protein belongs to the ATPase epsilon chain family. F-type ATPases have 2 components, CF(1) - the catalytic core - and CF(0) - the membrane proton channel. CF(1) has five subunits: alpha(3), beta(3), gamma(1), delta(1), epsilon(1). CF(0) has three main subunits: a, b and c.

The protein localises to the cell inner membrane. In terms of biological role, produces ATP from ADP in the presence of a proton gradient across the membrane. This Syntrophobacter fumaroxidans (strain DSM 10017 / MPOB) protein is ATP synthase epsilon chain.